Reading from the N-terminus, the 179-residue chain is MLRFKELYQQKIIENLQKEFSYKNKHEIPQIKKIVINMGVGEAIADSKVINNAVNDLTCISGQKPVVTLARKSIATFKLRESMKIGCKVTLRKDRMYDFLERLVIVALPRVKEFRGFSDKSFDGKGNFTFGLKEQIVFPEINYDKIDTIRGMDITIVTSAKTDKESKFLLSGFNLPFYN.

The protein belongs to the universal ribosomal protein uL5 family. In terms of assembly, part of the 50S ribosomal subunit; part of the 5S rRNA/L5/L18/L25 subcomplex. Contacts the 5S rRNA and the P site tRNA. Forms a bridge to the 30S subunit in the 70S ribosome.

In terms of biological role, this is one of the proteins that bind and probably mediate the attachment of the 5S RNA into the large ribosomal subunit, where it forms part of the central protuberance. In the 70S ribosome it contacts protein S13 of the 30S subunit (bridge B1b), connecting the 2 subunits; this bridge is implicated in subunit movement. Contacts the P site tRNA; the 5S rRNA and some of its associated proteins might help stabilize positioning of ribosome-bound tRNAs. This is Large ribosomal subunit protein uL5 from Rickettsia akari (strain Hartford).